Consider the following 363-residue polypeptide: Ethanol acetyltransferase 1 (363 aa).

The N-terminal 19 residues, 1–19 (MLLAYTVRPSNWSFTRRAY), are a transit peptide targeting the mitochondrion. The AB hydrolase-1 domain maps to 65–164 (PIIFYHGLLG…FSAACIIDNS (100 aa)). Residues Ser138, Asp162, and His313 each act as charge relay system in the active site.

It belongs to the AB hydrolase superfamily.

It is found in the mitochondrion. It catalyses the reaction ethanol + acetyl-CoA = ethyl acetate + CoA. The enzyme catalyses acetyl-CoA + H2O = acetate + CoA + H(+). The catalysed reaction is ethyl acetate + H2O = ethanol + acetate + H(+). In terms of biological role, alcohol acetyltransferase that catalyzes the synthesis of ethyl acetate from ethanol and acetyl-CoA. Can also function as a thioesterase by hydrolyzing acetyl-CoA in the absence of ethanol, as well as esterase hydrolyzing ethyl acetate. The polypeptide is Ethanol acetyltransferase 1 (EAT1) (Kluyveromyces marxianus (strain DMKU3-1042 / BCC 29191 / NBRC 104275) (Yeast)).